A 512-amino-acid chain; its full sequence is Ascofuranone/ascochlorin biosynthesis clusters transcription regulator (512 aa).

A DNA-binding region (zn(2)-C6 fungal-type) is located at residues 14–49; it reads CDRCHSQKLRCPRSVEPEKANPEEPCSRCRKAGVPC. Disordered regions lie at residues 54–87, 118–148, and 325–351; these read RGKV…PYDI, GSGS…DPLM, and GCTR…DGSI. Positions 56–70 are enriched in basic residues; that stretch reads KVGRPSKATKKKSAR. 2 stretches are compositionally biased toward low complexity: residues 118–127 and 327–342; these read GSGSVTTSAS and TRSS…GSSM.

Its subcellular location is the nucleus. Transcription factor that regulates the expression of the asc-1 and asc-2 gene clusters that mediate the biosynthesis of both ascochlorin and ascofuranone, a strong inhibitor of cyanide-insensitive alternative oxidases and a promising drug candidate against African trypanosomiasis. Binds the 5'-CGGYGNNTTW-3' motif within promoters of the target genes. This Acremonium egyptiacum (Oospora egyptiaca) protein is Ascofuranone/ascochlorin biosynthesis clusters transcription regulator.